The sequence spans 259 residues: uncharacterized protein (259 aa).

Positions 1 to 159 (MIEQFFRPDS…TEIIIKDPYR (159 aa)) constitute an FAD-binding PCMH-type domain.

This is an uncharacterized protein from Escherichia coli O157:H7.